The primary structure comprises 664 residues: Gametogenetin-binding protein 2 (664 aa).

Disordered regions lie at residues 375-425 (QEKK…NTSE) and 447-476 (KKGLTPHSNVSDCGYSSSLEGSEPGSQEGS). Basic residues predominate over residues 376–388 (EKKRQKKNRRKNK). Residues 452–475 (PHSNVSDCGYSSSLEGSEPGSQEG) are compositionally biased toward polar residues.

The protein localises to the cytoplasm. Its function is as follows. May be involved in spermatogenesis. This is Gametogenetin-binding protein 2 (ggnbp2) from Xenopus laevis (African clawed frog).